We begin with the raw amino-acid sequence, 208 residues long: MLVAIEGIDGAGKTTLARSLALKLRGVGLETVVSKEPTNGPWGTLLRQSAVTGRFSPEEEVDVLLRDRRQHVEDLIVPMIGRGAVVILDRYFPSMVAYQGAAGLPVDALLEANAFAPRPDVLLLLDVPPVIGLQRIWERGSTPNHFETTENLSRCRDIFLALELPSKRVIDATANAETVFSAALGLVMEVLRVRLGALGAVVLERLAG.

7–14 is an ATP binding site; sequence GIDGAGKT.

It belongs to the thymidylate kinase family.

The catalysed reaction is dTMP + ATP = dTDP + ADP. In terms of biological role, phosphorylation of dTMP to form dTDP in both de novo and salvage pathways of dTTP synthesis. The protein is Thymidylate kinase of Xylella fastidiosa (strain Temecula1 / ATCC 700964).